Consider the following 369-residue polypeptide: tRNA/tmRNA (uracil-C(5))-methyltransferase (369 aa).

Residues glutamine 190, tyrosine 218, asparagine 223, glutamate 239, and aspartate 301 each coordinate S-adenosyl-L-methionine. Cysteine 326 acts as the Nucleophile in catalysis. The active-site Proton acceptor is the glutamate 360.

This sequence belongs to the class I-like SAM-binding methyltransferase superfamily. RNA M5U methyltransferase family. TrmA subfamily.

It catalyses the reaction uridine(54) in tRNA + S-adenosyl-L-methionine = 5-methyluridine(54) in tRNA + S-adenosyl-L-homocysteine + H(+). The catalysed reaction is uridine(341) in tmRNA + S-adenosyl-L-methionine = 5-methyluridine(341) in tmRNA + S-adenosyl-L-homocysteine + H(+). In terms of biological role, dual-specificity methyltransferase that catalyzes the formation of 5-methyluridine at position 54 (m5U54) in all tRNAs, and that of position 341 (m5U341) in tmRNA (transfer-mRNA). This is tRNA/tmRNA (uracil-C(5))-methyltransferase from Vibrio cholerae serotype O1 (strain ATCC 39541 / Classical Ogawa 395 / O395).